The chain runs to 62 residues: Large ribosomal subunit protein bL28 (62 aa).

The segment at M1 to K28 is disordered.

The protein belongs to the bacterial ribosomal protein bL28 family.

The chain is Large ribosomal subunit protein bL28 from Bacillus cytotoxicus (strain DSM 22905 / CIP 110041 / 391-98 / NVH 391-98).